Here is a 311-residue protein sequence, read N- to C-terminus: D-alanine--D-alanine ligase (311 aa).

The 202-residue stretch at 105–306 (KQLYIHAGLP…FSALLDRLIE (202 aa)) folds into the ATP-grasp domain. 133–188 (ADRLGLPVVVKPEHEGSSIGLSIVRNRDQLAAAVETGWQYDRRCLIEKYVHGIEIT) is a binding site for ATP. Asp-261, Glu-273, and Asn-275 together coordinate Mg(2+).

This sequence belongs to the D-alanine--D-alanine ligase family. Mg(2+) serves as cofactor. It depends on Mn(2+) as a cofactor.

The protein resides in the cytoplasm. The catalysed reaction is 2 D-alanine + ATP = D-alanyl-D-alanine + ADP + phosphate + H(+). It participates in cell wall biogenesis; peptidoglycan biosynthesis. In terms of biological role, cell wall formation. This is D-alanine--D-alanine ligase from Syntrophobacter fumaroxidans (strain DSM 10017 / MPOB).